The chain runs to 317 residues: Carbamate kinase (317 aa).

The protein belongs to the carbamate kinase family. Homodimer.

The enzyme catalyses hydrogencarbonate + NH4(+) + ATP = carbamoyl phosphate + ADP + H2O + H(+). It functions in the pathway metabolic intermediate metabolism; carbamoyl phosphate degradation; CO(2) and NH(3) from carbamoyl phosphate: step 1/1. The sequence is that of Carbamate kinase (CBK) from Giardia intestinalis (Giardia lamblia).